A 501-amino-acid polypeptide reads, in one-letter code: Geissoschizine oxidase (501 aa).

Residues 1–21 (MEFSFSSPLLYILYFLLFFIV) traverse the membrane as a helical segment. Position 442 (Cys-442) interacts with heme.

It belongs to the cytochrome P450 family. Heme is required as a cofactor.

The protein resides in the membrane. The catalysed reaction is (19E)-geissoschizine + reduced [NADPH--hemoprotein reductase] + O2 = akuammicine + formate + oxidized [NADPH--hemoprotein reductase] + H2O + H(+). The protein operates within alkaloid biosynthesis. A cytochrome P450 monooxygenase involved in the biosynthesis of strychnos monoterpene indole alkaloids (MIAs) natural products, compounds with effects on glucose absorption. Catalyzes the conversion of geissoschizine to akuammicine. The sequence is that of Geissoschizine oxidase from Alstonia scholaris (Dogbane).